Here is a 327-residue protein sequence, read N- to C-terminus: Protoheme IX farnesyltransferase (327 aa).

Transmembrane regions (helical) follow at residues 55 to 75 (LVCT…LNCL), 101 to 121 (AAFV…VSGV), 124 to 144 (LAAG…TALL), 152 to 172 (IVVG…AATG), 180 to 200 (WLFA…ALLL), 237 to 257 (FLGI…ILPF), and 278 to 298 (AKGL…LLVM).

Belongs to the UbiA prenyltransferase family. Protoheme IX farnesyltransferase subfamily.

Its subcellular location is the cell inner membrane. It carries out the reaction heme b + (2E,6E)-farnesyl diphosphate + H2O = Fe(II)-heme o + diphosphate. It participates in porphyrin-containing compound metabolism; heme O biosynthesis; heme O from protoheme: step 1/1. In terms of biological role, converts heme B (protoheme IX) to heme O by substitution of the vinyl group on carbon 2 of heme B porphyrin ring with a hydroxyethyl farnesyl side group. The sequence is that of Protoheme IX farnesyltransferase from Synechococcus sp. (strain CC9311).